Here is a 281-residue protein sequence, read N- to C-terminus: HTH-type transcriptional activator RamA (281 aa).

Residues 213-278 form the HTH luxR-type domain; that stretch reads RIKQTTKLSA…EAVNAARRIG (66 aa).

RamA is a master regulator of acetate metabolism. It positively controls the expression of acnA, aceA, aceB, ack, pta and ramB genes in the presence of acetate. RamA is also a positive regulator of rpf2 gene expression during growth on glucose as the sole carbon source. The protein is HTH-type transcriptional activator RamA of Corynebacterium glutamicum (strain ATCC 13032 / DSM 20300 / JCM 1318 / BCRC 11384 / CCUG 27702 / LMG 3730 / NBRC 12168 / NCIMB 10025 / NRRL B-2784 / 534).